The chain runs to 205 residues: Holliday junction branch migration complex subunit RuvA (205 aa).

The interval 1–64 (MIGKLKGVID…EDMIRLYGFA (64 aa)) is domain I. The interval 65–143 (TQLEREWFRL…AFAGEASGTI (79 aa)) is domain II. The tract at residues 144 to 152 (GLKQELGAG) is flexible linker. The domain III stretch occupies residues 153–205 (AAPAPVADAVSALSNLGYSRDQAANAVAAALKETGEGADSAKLIRLGLKELSQ).

The protein belongs to the RuvA family. As to quaternary structure, homotetramer. Forms an RuvA(8)-RuvB(12)-Holliday junction (HJ) complex. HJ DNA is sandwiched between 2 RuvA tetramers; dsDNA enters through RuvA and exits via RuvB. An RuvB hexamer assembles on each DNA strand where it exits the tetramer. Each RuvB hexamer is contacted by two RuvA subunits (via domain III) on 2 adjacent RuvB subunits; this complex drives branch migration. In the full resolvosome a probable DNA-RuvA(4)-RuvB(12)-RuvC(2) complex forms which resolves the HJ.

Its subcellular location is the cytoplasm. Functionally, the RuvA-RuvB-RuvC complex processes Holliday junction (HJ) DNA during genetic recombination and DNA repair, while the RuvA-RuvB complex plays an important role in the rescue of blocked DNA replication forks via replication fork reversal (RFR). RuvA specifically binds to HJ cruciform DNA, conferring on it an open structure. The RuvB hexamer acts as an ATP-dependent pump, pulling dsDNA into and through the RuvAB complex. HJ branch migration allows RuvC to scan DNA until it finds its consensus sequence, where it cleaves and resolves the cruciform DNA. The protein is Holliday junction branch migration complex subunit RuvA of Brucella abortus (strain S19).